Reading from the N-terminus, the 136-residue chain is Group 1 truncated hemoglobin GlbN (136 aa).

Residue His81 participates in heme binding.

This sequence belongs to the truncated hemoglobin family. Group I subfamily. As to quaternary structure, homodimer. The cofactor is heme.

Functionally, binds oxygen cooperatively with very high affinity (P(50) = 0.013 mmHg at 20 degrees Celsius) because of a fast combination (25 microM(-1)sec(-1)) and a slow dissociation (0.2 sec(-1)) rate. This Mycobacterium bovis (strain ATCC BAA-935 / AF2122/97) protein is Group 1 truncated hemoglobin GlbN (glbN).